Here is a 251-residue protein sequence, read N- to C-terminus: MLKGHLHSVESLGTVDGPGLRYILFTQGCLLRCLYCHNPDTWKISEPSREVTVDEMVNEILPYKPYFDASGGGVTVSGGEPLLQMPFLEKLFAELKENGVHTCLDTSAGCANDTKAFQRHFEELQKHTDLILLDIKHIDNDKHIRLTGKPNTHILNFARKLSDMKQPVWIRHVLVPGYSDDKDDLIKLGEFINSLDNVEKFEILPYHQLGVHKWKTLGIAYELEDVEAPDDEAVKAAYRYVNFKGKIPVEL.

The Radical SAM core domain occupies 15–244 (VDGPGLRYIL…KAAYRYVNFK (230 aa)). The [4Fe-4S] cluster site is built by Cys-29, Cys-33, and Cys-36. S-adenosyl-L-methionine contacts are provided by residues 35 to 37 (YCH), Gly-79, 134 to 136 (DIK), and His-207.

This sequence belongs to the organic radical-activating enzymes family. [4Fe-4S] cluster serves as cofactor.

It localises to the cytoplasm. The enzyme catalyses glycyl-[formate C-acetyltransferase] + reduced [flavodoxin] + S-adenosyl-L-methionine = glycin-2-yl radical-[formate C-acetyltransferase] + semiquinone [flavodoxin] + 5'-deoxyadenosine + L-methionine + H(+). In terms of biological role, activation of pyruvate formate-lyase under anaerobic conditions by generation of an organic free radical, using S-adenosylmethionine and reduced flavodoxin as cosubstrates to produce 5'-deoxy-adenosine. This is Pyruvate formate-lyase-activating enzyme (pflA) from Staphylococcus aureus (strain N315).